The chain runs to 77 residues: Translation initiation factor IF-1, chloroplastic (77 aa).

The 71-residue stretch at 1-71 (MKEQKWIHEG…TRGRIIYRLR (71 aa)) folds into the S1-like domain.

Belongs to the IF-1 family. As to quaternary structure, component of the 30S ribosomal translation pre-initiation complex which assembles on the 30S ribosome in the order IF-2 and IF-3, IF-1 and N-formylmethionyl-tRNA(fMet); mRNA recruitment can occur at any time during PIC assembly.

Its subcellular location is the plastid. The protein resides in the chloroplast. One of the essential components for the initiation of protein synthesis. Stabilizes the binding of IF-2 and IF-3 on the 30S subunit to which N-formylmethionyl-tRNA(fMet) subsequently binds. Helps modulate mRNA selection, yielding the 30S pre-initiation complex (PIC). Upon addition of the 50S ribosomal subunit IF-1, IF-2 and IF-3 are released leaving the mature 70S translation initiation complex. In Garrya elliptica (Wavyleaf silktassel), this protein is Translation initiation factor IF-1, chloroplastic.